Here is a 526-residue protein sequence, read N- to C-terminus: Phosphoenolpyruvate carboxylase (526 aa).

It belongs to the PEPCase type 2 family. Homotetramer. Mg(2+) serves as cofactor.

It catalyses the reaction oxaloacetate + phosphate = phosphoenolpyruvate + hydrogencarbonate. Functionally, catalyzes the irreversible beta-carboxylation of phosphoenolpyruvate (PEP) to form oxaloacetate (OAA), a four-carbon dicarboxylic acid source for the tricarboxylic acid cycle. The polypeptide is Phosphoenolpyruvate carboxylase (Methanosarcina barkeri (strain Fusaro / DSM 804)).